Reading from the N-terminus, the 388-residue chain is Aldolase vrtJ (388 aa).

Lys241 bears the N6-(pyridoxal phosphate)lysine mark.

This sequence belongs to the threonine aldolase family. The cofactor is pyridoxal 5'-phosphate.

It functions in the pathway secondary metabolite biosynthesis; terpenoid biosynthesis. Functionally, aldolase; part of the gene cluster that mediates the biosynthesis of viridicatumtoxin, a tetracycline-like fungal meroterpenoid with a unique, fused spirobicyclic ring system. The first step of the pathway is the production of the malonamoyl-CoA starter unit for the polyketide synthase vrtA. The aldolase vrtJ may be involved in the synthesis of the malonamate substrate for malonamoyl-CoA synthetase vrtB. The polyketide synthase vrtA then may utilize the malonamoyl-CoA starter unit, followed by sequential condensation of eight malonyl-CoA units to form the polyketide backbone. The cyclization of the last ring could be mediated by the lactamase-like protein vrtG. The proposed post-PKS tailoring steps are a hydroxylation at C5 catalyzed the cytochrome P450 monooxygenase vrtE, a hydroxylation at C12a catalyzed by VrtH and/or VrtI, and an O-methylation by the O-methyltransferase vrtF. VrtC is then proposed to catalyze the transfer of a geranyl group synthesized by vrtD to the aromatic C ring of the tetracyclic polyketide intermediate of viridicatumtoxin to yield previridicatumtoxin. Finally, the cytochrome P450 monooxygenase vrtK catalyzes the spirocyclization of the geranyl moiety of previridicatumtoxin to afford viridicatumtoxin. The sequence is that of Aldolase vrtJ from Penicillium aethiopicum.